Consider the following 143-residue polypeptide: D-aminoacyl-tRNA deacylase (143 aa).

Residues 135–136 carry the Gly-cisPro motif, important for rejection of L-amino acids motif; sequence GP.

This sequence belongs to the DTD family. In terms of assembly, homodimer.

It localises to the cytoplasm. It catalyses the reaction glycyl-tRNA(Ala) + H2O = tRNA(Ala) + glycine + H(+). The enzyme catalyses a D-aminoacyl-tRNA + H2O = a tRNA + a D-alpha-amino acid + H(+). Its function is as follows. An aminoacyl-tRNA editing enzyme that deacylates mischarged D-aminoacyl-tRNAs. Also deacylates mischarged glycyl-tRNA(Ala), protecting cells against glycine mischarging by AlaRS. Acts via tRNA-based rather than protein-based catalysis; rejects L-amino acids rather than detecting D-amino acids in the active site. By recycling D-aminoacyl-tRNA to D-amino acids and free tRNA molecules, this enzyme counteracts the toxicity associated with the formation of D-aminoacyl-tRNA entities in vivo and helps enforce protein L-homochirality. In Mycobacterium marinum (strain ATCC BAA-535 / M), this protein is D-aminoacyl-tRNA deacylase.